A 350-amino-acid chain; its full sequence is Anthranilate phosphoribosyltransferase (350 aa).

5-phospho-alpha-D-ribose 1-diphosphate contacts are provided by residues glycine 93, 96–97 (GD), threonine 101, 103–106 (NIST), 121–129 (KHGNRSASG), and serine 133. Residue glycine 93 coordinates anthranilate. Mg(2+) is bound at residue serine 105. Residue asparagine 124 participates in anthranilate binding. Arginine 179 serves as a coordination point for anthranilate. The Mg(2+) site is built by aspartate 238 and glutamate 239.

This sequence belongs to the anthranilate phosphoribosyltransferase family. Homodimer. The cofactor is Mg(2+).

The catalysed reaction is N-(5-phospho-beta-D-ribosyl)anthranilate + diphosphate = 5-phospho-alpha-D-ribose 1-diphosphate + anthranilate. It functions in the pathway amino-acid biosynthesis; L-tryptophan biosynthesis; L-tryptophan from chorismate: step 2/5. Functionally, catalyzes the transfer of the phosphoribosyl group of 5-phosphorylribose-1-pyrophosphate (PRPP) to anthranilate to yield N-(5'-phosphoribosyl)-anthranilate (PRA). This Parasynechococcus marenigrum (strain WH8102) protein is Anthranilate phosphoribosyltransferase.